The following is a 402-amino-acid chain: Serine/threonine transporter SstT (402 aa).

8 helical membrane-spanning segments follow: residues 17–37 (IAIG…ITVI), 44–64 (FVGG…ANAL), 79–99 (IVLY…SHYI), 138–158 (ALSQ…GFAM), 179–199 (IVRW…FDTI), 212–232 (VLIL…NPII), 295–315 (MAGA…TLGI), and 336–356 (ASGI…LFGI).

It belongs to the dicarboxylate/amino acid:cation symporter (DAACS) (TC 2.A.23) family.

The protein localises to the cell membrane. The enzyme catalyses L-serine(in) + Na(+)(in) = L-serine(out) + Na(+)(out). It catalyses the reaction L-threonine(in) + Na(+)(in) = L-threonine(out) + Na(+)(out). Functionally, involved in the import of serine and threonine into the cell, with the concomitant import of sodium (symport system). This chain is Serine/threonine transporter SstT, found in Streptococcus thermophilus (strain ATCC BAA-491 / LMD-9).